Consider the following 35-residue polypeptide: Thrombin-like enzyme cerastobin (35 aa).

In terms of domain architecture, Peptidase S1 spans 1–35 (VIGGAKCNINEHRSIVLLYSSRLFGHTLINKEWVL).

This sequence belongs to the peptidase S1 family. Snake venom subfamily. In terms of assembly, monomer. As to expression, expressed by the venom gland.

The protein localises to the secreted. Its activity is regulated as follows. Inhibited by diisopropylfluorophosphate (DFP). Functionally, thrombin-like snake venom serine protease, that cleaves both alpha-chain (FGA) and beta-chain (FGB) of fibrinogen. Partially degrades factor X (F10), and release bradykinin from kininogen (KNG). Potently induces platelet aggregation. Shows a proteolytic activity towards protein constituents of the platelets cytoskeleton. Hydrolyzes actin, actin-binding protein, and P235. Shows a preferential cleavage at Arg-|-Xaa bonds. The protein is Thrombin-like enzyme cerastobin of Cerastes vipera (Sahara sand viper).